The primary structure comprises 757 residues: Mitofusin-2 (757 aa).

Residues 1 to 604 (MSLLFSRCNS…TQEELMVSMV (604 aa)) lie on the Cytoplasmic side of the membrane. The interval 30–94 (KHFVTAKKKI…VRGISEVLAR (65 aa)) is part of a helix bundle domain, formed by helices from N-terminal and C-terminal regions. The 250-residue stretch at 93 to 342 (ARRHMKVAFF…VRMFEFQNFE (250 aa)) folds into the Dynamin-type G domain. Residues 103–110 (GRTSNGKS) form a G1 motif region. 106–111 (SNGKST) is a GTP binding site. Thr-111 carries the post-translational modification Phosphothreonine; by PINK1. The segment at 129 to 130 (TT) is G2 motif. The segment at 199 to 202 (DSPG) is G3 motif. A GTP-binding site is contributed by 258 to 261 (NRWD). A G4 motif region spans residues 258 to 261 (NRWD). Glu-288 is a region of interest (G5 motif). Residues Ser-305 and Lys-307 each contribute to the GTP site. A part of a helix bundle domain, formed by helices from N-terminal and C-terminal regions region spans residues 359-385 (EQHTVRAKQIAEAVRLIMDSLHIAAQE). A coiled-coil region spans residues 406 to 434 (KQLELLAQDYKLRIKQITEEVERQVSTAM). Position 442 is a phosphoserine (Ser-442). Residues 605–625 (TGLASLTSRTSMGILVVGGVV) form a helical membrane-spanning segment. Residue Trp-626 is a topological domain, mitochondrial intermembrane. Residues 627 to 647 (KAVGWRLIALSFGLYGLLYVY) form a helical membrane-spanning segment. The Cytoplasmic segment spans residues 648 to 757 (ERLTWTTKAK…FTHQYLQPSR (110 aa)). Residues 696 to 738 (FAHLCQQVDITRDNLEQEIAAMNKKVEALDSLQSRAKLLRNKA) adopt a coiled-coil conformation. Residues 722 to 753 (EALDSLQSRAKLLRNKAGWLDSELNMFTHQYL) are part of a helix bundle domain, formed by helices from N-terminal and C-terminal regions.

It belongs to the TRAFAC class dynamin-like GTPase superfamily. Dynamin/Fzo/YdjA family. Mitofusin subfamily. Forms homomultimers and heteromultimers with MFN1. Oligomerization is essential for mitochondrion fusion. Interacts with VAT1. Interacts with STOML2; may form heterooligomers. Interacts (phosphorylated) with PRKN. Interacts with EIF2AK3. Interacts with THG1L; THG1L probably functions as a guanyl-nucleotide exchange factor/GEF, activating MFN2. Post-translationally, phosphorylated by PINK1. Ubiquitinated by non-degradative ubiquitin by PRKN, promoting mitochondrial fusion; deubiquitination by USP30 inhibits mitochondrial fusion. Ubiquitinated by HUWE1 when dietary stearate (C18:0) levels are low; ubiquitination inhibits mitochondrial fusion. Ubiquitous. Expression is markedly reduced in ApoE-knockout mouse atherosclerotic arteries.

It is found in the mitochondrion outer membrane. The enzyme catalyses GTP + H2O = GDP + phosphate + H(+). In terms of biological role, mitochondrial outer membrane GTPase that mediates mitochondrial clustering and fusion. Mitochondria are highly dynamic organelles, and their morphology is determined by the equilibrium between mitochondrial fusion and fission events. Overexpression induces the formation of mitochondrial networks. Membrane clustering requires GTPase activity and may involve a major rearrangement of the coiled coil domains. Plays a central role in mitochondrial metabolism and may be associated with obesity and/or apoptosis processes. Plays an important role in the regulation of vascular smooth muscle cell proliferation. Involved in the clearance of damaged mitochondria via selective autophagy (mitophagy). Is required for PRKN recruitment to dysfunctional mitochondria. Involved in the control of unfolded protein response (UPR) upon ER stress including activation of apoptosis and autophagy during ER stress. Acts as an upstream regulator of EIF2AK3 and suppresses EIF2AK3 activation under basal conditions. The polypeptide is Mitofusin-2 (Mfn2) (Mus musculus (Mouse)).